Here is a 968-residue protein sequence, read N- to C-terminus: RNA polymerase-associated protein RapA (968 aa).

The region spanning 163–332 (EVGSRYAPRV…FARLRLLDPD (170 aa)) is the Helicase ATP-binding domain. Residue 176–183 (DEVGLGKT) participates in ATP binding. The DEAH box motif lies at 278–281 (DEAH). The region spanning 491-655 (RVDWLIEFLK…EFADELINVL (165 aa)) is the Helicase C-terminal domain.

This sequence belongs to the SNF2/RAD54 helicase family. RapA subfamily. As to quaternary structure, interacts with the RNAP. Has a higher affinity for the core RNAP than for the holoenzyme. Its ATPase activity is stimulated by binding to RNAP.

Transcription regulator that activates transcription by stimulating RNA polymerase (RNAP) recycling in case of stress conditions such as supercoiled DNA or high salt concentrations. Probably acts by releasing the RNAP, when it is trapped or immobilized on tightly supercoiled DNA. Does not activate transcription on linear DNA. Probably not involved in DNA repair. In Shewanella frigidimarina (strain NCIMB 400), this protein is RNA polymerase-associated protein RapA.